The sequence spans 88 residues: RNA-binding protein Hfq (88 aa).

The region spanning 10 to 70 (DRFLNILRTK…ISTILPAEYI (61 aa)) is the Sm domain.

This sequence belongs to the Hfq family. In terms of assembly, homohexamer.

Functionally, RNA chaperone that binds small regulatory RNA (sRNAs) and mRNAs to facilitate mRNA translational regulation in response to envelope stress, environmental stress and changes in metabolite concentrations. Also binds with high specificity to tRNAs. This Fervidobacterium nodosum (strain ATCC 35602 / DSM 5306 / Rt17-B1) protein is RNA-binding protein Hfq.